Consider the following 229-residue polypeptide: Nisin biosynthesis regulatory protein NisR (229 aa).

Residues 4–117 (KILIVDDDQE…QLVAKVEANI (114 aa)) form the Response regulatory domain. Asp-53 carries the 4-aspartylphosphate modification. The segment at residues 132–229 (EIRRDLGPIT…VRGLGYQWHG (98 aa)) is a DNA-binding region (ompR/PhoB-type).

Phosphorylated by NisK.

Member of the two-component regulatory system NisK/NisR involved in the regulation of the biosynthesis of lantibiotic nisin. NisR may function as a regulatory protein. The chain is Nisin biosynthesis regulatory protein NisR (nisR) from Lactococcus lactis subsp. lactis (Streptococcus lactis).